The sequence spans 569 residues: Cysteine--tRNA ligase CPS1 homolog, chloroplastic/mitochondrial (569 aa).

The transit peptide at M1–Y42 directs the protein to the chloroplast and mitochondrion. C99 lines the Zn(2+) pocket. The 'HIGH' region motif lies at V101–H111. Zn(2+) is bound by residues C279, H304, and E308. Positions K336–S340 match the 'KMSKS' region motif. K339 serves as a coordination point for ATP.

It belongs to the class-I aminoacyl-tRNA synthetase family. It depends on Zn(2+) as a cofactor.

Its subcellular location is the plastid. It is found in the chloroplast. It localises to the mitochondrion. The catalysed reaction is tRNA(Cys) + L-cysteine + ATP = L-cysteinyl-tRNA(Cys) + AMP + diphosphate. Nuclear genome-encoded factor required for normal assembly of chloroplast polysomes. This is Cysteine--tRNA ligase CPS1 homolog, chloroplastic/mitochondrial from Oryza sativa subsp. japonica (Rice).